The chain runs to 534 residues: Zinc finger protein 671 (534 aa).

Positions 49–120 constitute a KRAB domain; the sequence is VVFEDVFVYF…DQVDMTSATE (72 aa). A C2H2-type 1; degenerate zinc finger spans residues 192-214; that stretch reads YLCGACGKQFWFSTDFDQHQNQP. C2H2-type zinc fingers lie at residues 285 to 307, 313 to 335, 341 to 363, 369 to 391, 397 to 419, 425 to 447, 451 to 473, 479 to 501, and 507 to 529; these read HRCG…QRIH, YECN…QTVH, YECS…RRVH, YQCG…QEVH, YVCS…QRTH, YECS…WRIH, YECS…QKVH, YECS…WKVH, and YVCS…QRVH.

This sequence belongs to the krueppel C2H2-type zinc-finger protein family.

It localises to the nucleus. Functionally, may be involved in transcriptional regulation. This chain is Zinc finger protein 671 (ZNF671), found in Homo sapiens (Human).